The chain runs to 301 residues: Glutathione transport system permease protein GsiD (301 aa).

6 helical membrane-spanning segments follow: residues 37 to 57 (VAVAAGLFVLLLIAIAFWAQY), 103 to 123 (LAAGIFSVLVGMMIGTTLGLL), 141 to 161 (VLFAFPGILLAIAVVAIMGSG), 162 to 182 (MANVVVAVAIFSIPAFARLVR), 220 to 240 (IVVFFSMRIGMSIITAASLSF), and 264 to 284 (VIAPHVAIFPSLAIFLTVLAF). One can recognise an ABC transmembrane type-1 domain in the interval 99 to 288 (TRISLAAGIF…LTVLAFNLLG (190 aa)).

Belongs to the binding-protein-dependent transport system permease family. The complex is composed of two ATP-binding proteins (GsiA), two transmembrane proteins (GsiC and GsiD) and a solute-binding protein (GsiB).

The protein localises to the cell inner membrane. Part of the ABC transporter complex GsiABCD involved in glutathione import. Probably responsible for the translocation of the substrate across the membrane. The sequence is that of Glutathione transport system permease protein GsiD from Pectobacterium atrosepticum (strain SCRI 1043 / ATCC BAA-672) (Erwinia carotovora subsp. atroseptica).